A 343-amino-acid polypeptide reads, in one-letter code: MLTNRQLQILQVIIDDFILSAQPVGSRQISKKQGITFSPATIRNEMADLEELGYLEKTHTSSGRVPSEKGYRFYVDHLLSPQGINSRDIQQIQSIFNDRLVEVEHIIRKSANILSELTSYTSILLGPDVQRHRVKRFSIVPLSSDTAVAIIVTNNGHVENRLFNLPPDFTASDLEKMVNILNDRLIGVSLEELHKSLEAEVLAVLQQHVQSADDFYPRTRNSDNAIIQKAKIFYGGKTNMFNQPEFHDLNKVRMILDLMETTSQVQSLFHPNESGIHIRIGSENKQLEMENCSVITTTYSIGDDQQGAIAIIGPTRMDYKRVVALLDVIRLDLTQAFTKNRSE.

This sequence belongs to the HrcA family.

Negative regulator of class I heat shock genes (grpE-dnaK-dnaJ and groELS operons). Prevents heat-shock induction of these operons. The polypeptide is Heat-inducible transcription repressor HrcA (Lysinibacillus sphaericus (Bacillus sphaericus)).